The primary structure comprises 156 residues: Small ribosomal subunit protein uS7 (156 aa).

Belongs to the universal ribosomal protein uS7 family. Part of the 30S ribosomal subunit. Contacts proteins S9 and S11.

In terms of biological role, one of the primary rRNA binding proteins, it binds directly to 16S rRNA where it nucleates assembly of the head domain of the 30S subunit. Is located at the subunit interface close to the decoding center, probably blocks exit of the E-site tRNA. The sequence is that of Small ribosomal subunit protein uS7 from Aeromonas hydrophila subsp. hydrophila (strain ATCC 7966 / DSM 30187 / BCRC 13018 / CCUG 14551 / JCM 1027 / KCTC 2358 / NCIMB 9240 / NCTC 8049).